A 676-amino-acid chain; its full sequence is Electrogenic aspartate/glutamate antiporter SLC25A13, mitochondrial (676 aa).

Alanine 2 is modified (N-acetylalanine). Positions 2-295 are regulatory N-terminal domain; the sequence is AAAKVALTKR…TLADIERIAP (294 aa). The Mitochondrial intermembrane segment spans residues 2 to 332; that stretch reads AAAKVALTKR…LLQLAESAYR (331 aa). 4 EF-hand domains span residues 51–86, 87–122, 125–157, and 158–193; these read SQPN…SVLC, APDA…TTIH, IPFN…FLLE, and IQLE…IRPH. Positions 66, 68, 70, 72, and 77 each coordinate Ca(2+). The segment at 296–312 is linker loop domain; that stretch reads LEEGMLPFNLAEAQRQQ. The carrier domain stretch occupies residues 322–613; sequence FLLQLAESAY…LQRWFYVDFG (292 aa). Solcar repeat units follow at residues 327 to 419, 427 to 511, and 519 to 607; these read AESA…VRDK, VPLL…VKAS, and VSPG…LQRW. The helical transmembrane segment at 333–350 threads the bilayer; sequence FGLGSIAGAVGATAVYPI. Residues 351 to 393 lie on the Mitochondrial matrix side of the membrane; that stretch reads DLVKTRMQNQRSTGSFVGELMYKNSFDCFKKVLRYEGFFGLYR. Lysine 354 and lysine 373 each carry N6-acetyllysine. The chain crosses the membrane as a helical span at residues 394-413; it reads GLLPQLLGVAPEKAIKLTVN. The Mitochondrial intermembrane portion of the chain corresponds to 414-436; it reads DFVRDKFMHKDGSVPLLAEIFAG. A helical membrane pass occupies residues 437 to 450; it reads GCAGGSQVIFTNPL. At 451 to 485 the chain is on the mitochondrial matrix side; sequence EIVKIRLQVAGEITTGPRVSALSVVRDLGFFGIYK. Lysine 454 is subject to N6-methyllysine. Lysine 485 is modified (N6-acetyllysine; alternate). Residue lysine 485 is modified to N6-succinyllysine; alternate. Residues 486–505 form a helical membrane-spanning segment; it reads GAKACFLRDIPFSAIYFPCY. The Mitochondrial intermembrane portion of the chain corresponds to 506-524; it reads AHVKASFANEDGQVSPGSL. The helical transmembrane segment at 525–542 threads the bilayer; the sequence is LLAGAIAGMPAASLVTPA. Topologically, residues 543 to 581 are mitochondrial matrix; sequence DVIKTRLQVAARAGQTTYSGVTDCFRKILREEGPKALWK. Lysine 581 is subject to N6-succinyllysine. Residues 582–601 traverse the membrane as a helical segment; sequence GAGARVFRSSPQFGVTLLTY. At 602-676 the chain is on the mitochondrial intermembrane side; that stretch reads ELLQRWFYVD…STSKVTAVGS (75 aa). Residues 614–676 are C-terminal domain; sequence GVKPVGSELV…STSKVTAVGS (63 aa). An N6-acetyllysine modification is found at lysine 663. At serine 667 the chain carries Phosphoserine.

This sequence belongs to the mitochondrial carrier (TC 2.A.29) family. As to quaternary structure, homodimer (via N-terminus).

The protein resides in the mitochondrion inner membrane. It catalyses the reaction L-aspartate(in) + L-glutamate(out) + H(+)(out) = L-aspartate(out) + L-glutamate(in) + H(+)(in). It carries out the reaction 3-sulfino-L-alanine(out) + L-glutamate(in) + H(+)(in) = 3-sulfino-L-alanine(in) + L-glutamate(out) + H(+)(out). The catalysed reaction is 3-sulfino-L-alanine(out) + L-aspartate(in) = 3-sulfino-L-alanine(in) + L-aspartate(out). L-aspartate and 3-sulfino-L-alanine uptake are both inhibited by glisoxepide. Mitochondrial electrogenic aspartate/glutamate antiporter that favors efflux of aspartate and entry of glutamate and proton within the mitochondria as part of the malate-aspartate shuttle. Also mediates the uptake of L-cysteinesulfinate (3-sulfino-L-alanine) by mitochondria in exchange of L-glutamate and proton. Can also exchange L-cysteinesulfinate with aspartate in their anionic form without any proton translocation. Lacks transport activity towards gamma-aminobutyric acid (GABA). In Rattus norvegicus (Rat), this protein is Electrogenic aspartate/glutamate antiporter SLC25A13, mitochondrial.